Consider the following 310-residue polypeptide: Probable manganese-dependent inorganic pyrophosphatase (310 aa).

Residues His9, Asp13, Asp15, Asp75, His97, and Asp149 each coordinate Mn(2+).

This sequence belongs to the PPase class C family. It depends on Mn(2+) as a cofactor.

It localises to the cytoplasm. It catalyses the reaction diphosphate + H2O = 2 phosphate + H(+). The protein is Probable manganese-dependent inorganic pyrophosphatase of Brevibacillus brevis (strain 47 / JCM 6285 / NBRC 100599).